We begin with the raw amino-acid sequence, 444 residues long: Phosphoglucosamine mutase (444 aa).

Ser-102 serves as the catalytic Phosphoserine intermediate. The Mg(2+) site is built by Ser-102, Asp-241, Asp-243, and Asp-245. Ser-102 is subject to Phosphoserine.

The protein belongs to the phosphohexose mutase family. It depends on Mg(2+) as a cofactor. Activated by phosphorylation.

It carries out the reaction alpha-D-glucosamine 1-phosphate = D-glucosamine 6-phosphate. Functionally, catalyzes the conversion of glucosamine-6-phosphate to glucosamine-1-phosphate. The protein is Phosphoglucosamine mutase of Actinobacillus pleuropneumoniae serotype 7 (strain AP76).